The sequence spans 358 residues: GDSL esterase/lipase EXL5 (358 aa).

The first 21 residues, 1 to 21 (MFRKKMLVLALFSIYFLSIEA), serve as a signal peptide directing secretion. N-linked (GlcNAc...) asparagine glycosylation is present at Asn24. Ser36 serves as the catalytic Nucleophile. Catalysis depends on residues Asp333 and His336.

Belongs to the 'GDSL' lipolytic enzyme family. As to expression, flower buds.

Its subcellular location is the secreted. The polypeptide is GDSL esterase/lipase EXL5 (EXL5) (Arabidopsis thaliana (Mouse-ear cress)).